The sequence spans 280 residues: Apoptosis regulator ced-9 (280 aa).

A disordered region spans residues 33 to 59 (GTEPTDFGINSDAQDLPSPSRQASTRR). Over residues 43 to 59 (SDAQDLPSPSRQASTRR) the composition is skewed to polar residues. The short motif at 80 to 99 (IEGFVVDYFTHRIRQNGMEW) is the BH4 element. Residues 160–179 (QTDQCPMSYGRLIGLISFGG) carry the BH1 motif. Residues 213 to 229 (NWKEHNRSWDDFMTLGK) carry the BH2 motif.

It belongs to the Bcl-2 family. In terms of assembly, interacts with asymmetric homodimer ced-4; the interaction sequesters ced-4. Interacts with egl-1; the interaction results in ced-4 release. Interacts with dre-1; the interaction inhibits ced-9 activity, either directly or indirectly. Interacts with dct-1. May form a complex composed of ced-9, ced-4 and mac-1. Interacts with dynamin-related protein drp-1 (via residues 280-502); the interaction is enhanced by GTP rather than GDP; the interaction is probably direct and may occur at the mitochondrion. Interaction with drp-1 may be enhanced by interaction of ced-9 with egl-1, but not with ced-4. A ced-9/egl-1 complex may recruit drp-1 to the mitochondrial surface. Interacts with fzo-1; interaction may be suppressed by interaction of ced-9 with egl-1.

Its subcellular location is the perikaryon. It is found in the synapse. It localises to the endomembrane system. The protein localises to the mitochondrion membrane. The protein resides in the cytoplasm. Plays a major role in programmed cell death (PCD, apoptosis). egl-1 binds to and directly inhibits the activity of ced-9, releasing the cell death activator ced-4 from a ced-9/ced-4 containing protein complex and allowing ced-4 to activate the cell-killing caspase ced-3. During larval development, required for the elimination of transient presynaptic components downstream of egl-1 and upstream of ced-4 and ced-3 apoptotic pathway. Has been shown in one study to be dispensable in mitochondrial dynamics and morphology during early embryonic development. However, another study shows that a egl-1/ced-9 containing complex may promote drp-1-dependent mitochondrial fission. The protein is Apoptosis regulator ced-9 (ced-9) of Caenorhabditis elegans.